The chain runs to 848 residues: Dynein axonemal intermediate chain 4 (848 aa).

Disordered regions lie at residues 345-370 (SKANVLPKDQDQRLPGSTTEKNSETS) and 431-464 (EPEPEEPEDVLESAKHEEVEEESKKEEEEEIHAE). A compositionally biased stretch (polar residues) spans 359–370 (PGSTTEKNSETS). Over residues 442 to 456 (ESAKHEEVEEESKKE) the composition is skewed to basic and acidic residues. WD repeat units follow at residues 534 to 574 (QSPY…NVPV), 583 to 631 (KHLG…DCYD), 658 to 698 (SRQA…QYLD), 702 to 742 (GHKG…PSLS), 745 to 784 (PATSVVYDVAWSPKSSYIFAAANENRVEIWDLHISTLDPL), and 790 to 829 (NPGIKFTTILFAKQTDCLLVGDSDGQVSVYELRNMPTVLE).

In terms of assembly, part of the multisubunit axonemal dynein complex formed at least of two heavy chains and a number of intermediate and light chains. Associated with axonemal dynein subunits such as, DNAH2, DNAI3, and DYNLT1. Interacts with DYNLT1.

The protein localises to the cytoplasm. It localises to the cytoskeleton. Its subcellular location is the flagellum axoneme. The protein resides in the cilium axoneme. It is found in the dynein axonemal particle. Its function is as follows. Plays a critical role in the assembly of axonemal dynein complex, thereby playing a role in ciliary motility. This is Dynein axonemal intermediate chain 4 from Homo sapiens (Human).